Consider the following 448-residue polypeptide: MTAYEMNFDGLVGPTHNYGGLSYGNVASQSNSQAISNPKEAAKQGLAKMKALMDMGFKQGVLAPQERPDVAALRRLGFTGSDPEVIARAAREAMPLLVASCSASSMWTANACTVSPSADTADARVHFTAANLNCKFHRSIEHPTTSRVLQAMFASQEHFAHHPALPAVSQFGDEGAANHTRFCKSYGEPGVEFFVYGRSAFDSRYPAPARYPARQTLEASQAVARLHGLSEEGVVYAQQNPAVIDQGVFHNDVIAVGNGEVLFYHQDAFLDTDKVLGELGSKLAGRGGNFQAVCVPNSAVSVEDAVKSYLFNSQLLTRADGSMLLVVPEECRNNASVWRYLEQLTAGNGPIREVRVFDLKQSMQNGGGPACLRLRVALKEQELAAVNPGVVMSLELHDRLVAWVDKHYRDRLSEADLADPQLLIECRTALDELTQILKLGSVYPFQMT.

Substrate contacts are provided by residues 19–28, Asn-110, and 137–138; these read GGLSYGNVAS and HR. Glu-174 is an active-site residue. Residue Arg-214 coordinates substrate. His-250 is a catalytic residue. 2 residues coordinate substrate: Asp-252 and Asn-365. The active-site Nucleophile is Cys-371.

The protein belongs to the succinylarginine dihydrolase family. As to quaternary structure, homodimer.

It carries out the reaction N(2)-succinyl-L-arginine + 2 H2O + 2 H(+) = N(2)-succinyl-L-ornithine + 2 NH4(+) + CO2. Its pathway is amino-acid degradation; L-arginine degradation via AST pathway; L-glutamate and succinate from L-arginine: step 2/5. Catalyzes the hydrolysis of N(2)-succinylarginine into N(2)-succinylornithine, ammonia and CO(2). The polypeptide is N-succinylarginine dihydrolase (Ectopseudomonas mendocina (strain ymp) (Pseudomonas mendocina)).